A 184-amino-acid polypeptide reads, in one-letter code: Ribosome-recycling factor (184 aa).

Over residues 133 to 162 (RDGMDNLKQDENKKEISEDERKRHETEVQK) the composition is skewed to basic and acidic residues. The disordered stretch occupies residues 133 to 163 (RDGMDNLKQDENKKEISEDERKRHETEVQKL).

It belongs to the RRF family.

The protein localises to the cytoplasm. Responsible for the release of ribosomes from messenger RNA at the termination of protein biosynthesis. May increase the efficiency of translation by recycling ribosomes from one round of translation to another. The protein is Ribosome-recycling factor of Sphingopyxis alaskensis (strain DSM 13593 / LMG 18877 / RB2256) (Sphingomonas alaskensis).